The following is a 522-amino-acid chain: Probable cytochrome P450 12e1, mitochondrial (522 aa).

Cys468 provides a ligand contact to heme.

Belongs to the cytochrome P450 family. Requires heme as cofactor.

The protein localises to the mitochondrion membrane. The chain is Probable cytochrome P450 12e1, mitochondrial (Cyp12e1) from Drosophila melanogaster (Fruit fly).